A 464-amino-acid chain; its full sequence is 17,18-epoxy-17-hydroxycur-19-ene N-malonyltransferase (464 aa).

Active-site proton acceptor residues include His191 and Asp403.

Belongs to the plant acyltransferase family. In terms of assembly, monomer. In terms of tissue distribution, mainly expressed in roots.

It is found in the cytoplasm. The catalysed reaction is 17,18-epoxy-17-hydroxycur-19-ene + malonyl-CoA = prestrychnine + CoA. The protein operates within alkaloid biosynthesis. Malonylransferase involved in the biosynthesis of curare monoterpene indole alkaloids (MIAs), natural products such as strychnine, a neurotoxic compound used as a pesticide to control rodents, and its pharmacologically active derivatives, including brucine, used to regulate blood pressure. Curare alkaloids act as animal glycine receptor antagonists. Catalyzes the conversion of 17,18-epoxy-17-hydroxycur-19-ene (Wieland-Gumlich aldehyde) to prestrychnine, which is spontaneously converted into strychnine and isostrychnine. The chain is 17,18-epoxy-17-hydroxycur-19-ene N-malonyltransferase from Strychnos nux-vomica (Poison nut).